The sequence spans 715 residues: MSSPKRSSKPSMSLAPSGSSMPTADPKPPASLKSTKSATPNRSLVPTKPATSRNSVMSPSSSKSTKSTSTKRAPSNRPSSRSRVRSKARTPSRVSTDTRTSKASKASDVRCHQRRGTHSRGRTPGRRGSRSSKRSPSRASTPGRIRTHGARPGMASRVRTPTSQQKGSRGKSYGRPRTSNRERSDSQPRNLSKKSYRPPGGSGIGRSSELAVTPSTAKCQTPTGIPSKEKSDNPSPSSSRKVKSYGQMIIPSREKSYSPTEMSSRVKSYNQASTRSRPQSHSQSRSPRRSRSGSQKRTHSRVRSHSWKRNHSRARSRTRKGILSQMGRHSQSRSHSKGKSQNQSRTPRRGRSHNWSRNPSKERSHSHSRSSSKERDHRGSSSPRKESGRSQSGSPNKQRDHSRSRSPNKARDRSRSRSPYKARDRSRSRSPNKARDCSRSRSPYKARDRSRSRSPNKARDHSRSRSPNKARDRSRSRSPSKERDHSQLGSPSKERDHRRSRSPSKERQCRQSRSSSKERDHRRSRSPSKERQRRQSRSPNKERDRSQSRSPSEEREHRQSRSPSKERDRRRWRSPSKERERRQSRSSSEERDHSRSRSPNKQSGYSRPRASSKEKAHSRSRTPSKEGNHSQSRTSSKESDPSQSTVPRSPDWKRSPTRTSSLSQNRTPSKTSSHSPSTFPSGGQTLSQDDSQADATTSKATLPGERSSSSSSKLA.

Low complexity predominate over residues 1–13 (MSSPKRSSKPSMS). The tract at residues 1 to 715 (MSSPKRSSKP…RSSSSSSKLA (715 aa)) is disordered. Over residues 32–59 (LKSTKSATPNRSLVPTKPATSRNSVMSP) the composition is skewed to polar residues. The segment covering 60-79 (SSSKSTKSTSTKRAPSNRPS) has biased composition (low complexity). Positions 80-90 (SRSRVRSKART) are enriched in basic residues. Residues 92 to 104 (SRVSTDTRTSKAS) show a composition bias toward polar residues. The segment covering 112 to 136 (HQRRGTHSRGRTPGRRGSRSSKRSP) has biased composition (basic residues). Polar residues-rich tracts occupy residues 213–224 (TPSTAKCQTPTG) and 257–272 (YSPT…YNQA). The span at 273 to 285 (STRSRPQSHSQSR) shows a compositional bias: low complexity. A compositionally biased stretch (basic residues) spans 286 to 320 (SPRRSRSGSQKRTHSRVRSHSWKRNHSRARSRTRK). Composition is skewed to basic and acidic residues over residues 359 to 388 (PSKE…KESG) and 397 to 521 (KQRD…ERDH). Residues 522-536 (RRSRSPSKERQRRQS) show a composition bias toward basic residues. Composition is skewed to basic and acidic residues over residues 539–595 (PNKE…DHSR) and 611–628 (SSKE…KEGN). The segment covering 657-666 (TRTSSLSQNR) has biased composition (polar residues). Residues 667–681 (TPSKTSSHSPSTFPS) are compositionally biased toward low complexity. A compositionally biased stretch (polar residues) spans 682-715 (GGQTLSQDDSQADATTSKATLPGERSSSSSSKLA).

This chain is Serine/arginine repetitive matrix protein 5 (SRRM5), found in Homo sapiens (Human).